The primary structure comprises 412 residues: Gamma-glutamyl phosphate reductase (412 aa).

It belongs to the gamma-glutamyl phosphate reductase family.

It localises to the cytoplasm. It carries out the reaction L-glutamate 5-semialdehyde + phosphate + NADP(+) = L-glutamyl 5-phosphate + NADPH + H(+). It functions in the pathway amino-acid biosynthesis; L-proline biosynthesis; L-glutamate 5-semialdehyde from L-glutamate: step 2/2. In terms of biological role, catalyzes the NADPH-dependent reduction of L-glutamate 5-phosphate into L-glutamate 5-semialdehyde and phosphate. The product spontaneously undergoes cyclization to form 1-pyrroline-5-carboxylate. This Actinobacillus pleuropneumoniae serotype 7 (strain AP76) protein is Gamma-glutamyl phosphate reductase.